The primary structure comprises 142 residues: MKPPIALACLCLLVPLAGGNLVQFGVMIERMTGKPALQYNDYGCYCGVGGSHWPVDETDWCCHAHDCCYGRLEKLGCDPKLEKYLFSITRDNIFCAGRTACQRHTCECDKRAALCFRHNLNTYNRKYAHYPNKLCTGPTPPC.

The first 19 residues, 1–19 (MKPPIALACLCLLVPLAGG), serve as a signal peptide directing secretion. Ca(2+) is bound by residues aspartate 41, glycine 43, tyrosine 45, glycine 47, and glycine 49. Cystine bridges form between cysteine 44/cysteine 135, cysteine 46/cysteine 62, cysteine 61/cysteine 115, cysteine 67/cysteine 142, cysteine 68/cysteine 108, cysteine 77/cysteine 101, and cysteine 95/cysteine 106. Histidine 65 is an active-site residue. Aspartate 66 serves as a coordination point for Ca(2+). Aspartate 109 is an active-site residue. The Ca(2+) site is built by tyrosine 130 and asparagine 132.

The protein belongs to the phospholipase A2 family. It depends on Ca(2+) as a cofactor. As to expression, highly expressed in skin and uterus, and at lower levels in various other tissues. Expressed in hair follicles, specifically localized in companion cells of the outer root sheath and cuticular cells of the inner root sheath in hair follicles during anagen. Expressed in white and brown adipose tissue.

It localises to the secreted. Its subcellular location is the cytoplasm. The catalysed reaction is a 1,2-diacyl-sn-glycero-3-phosphoethanolamine + H2O = a 1-acyl-sn-glycero-3-phosphoethanolamine + a fatty acid + H(+). It carries out the reaction 1-hexadecanoyl-2-(9Z-octadecenoyl)-sn-glycero-3-phosphoethanolamine + H2O = 1-hexadecanoyl-sn-glycero-3-phosphoethanolamine + (9Z)-octadecenoate + H(+). It catalyses the reaction 1-hexadecanoyl-2-(9Z,12Z-octadecadienoyl)-sn-glycero-3-phosphoethanolamine + H2O = 1-hexadecanoyl-sn-glycero-3-phosphoethanolamine + (9Z,12Z)-octadecadienoate + H(+). The enzyme catalyses 1-hexadecanoyl-2-(5Z,8Z,11Z,14Z-eicosatetraenoyl)-sn-glycero-3-phosphoethanolamine + H2O = 1-hexadecanoyl-sn-glycero-3-phosphoethanolamine + (5Z,8Z,11Z,14Z)-eicosatetraenoate + H(+). The catalysed reaction is 1,2-dihexadecanoyl-sn-glycero-3-phospho-(1'-sn-glycerol) + H2O = 1-hexadecanoyl-sn-glycero-3-phospho-(1'-sn-glycerol) + hexadecanoate + H(+). It carries out the reaction 1-hexadecanoyl-2-(9Z-octadecenoyl)-sn-glycero-3-phosphoglycerol + H2O = 1-hexadecanoyl-sn-glycero-3-phosphoglycerol + (9Z)-octadecenoate + H(+). It catalyses the reaction a 1,2-diacyl-sn-glycero-3-phosphocholine + H2O = a 1-acyl-sn-glycero-3-phosphocholine + a fatty acid + H(+). The enzyme catalyses 1,2-dihexadecanoyl-sn-glycero-3-phosphocholine + H2O = 1-hexadecanoyl-sn-glycero-3-phosphocholine + hexadecanoate + H(+). The catalysed reaction is 1-hexadecanoyl-2-(9Z-octadecenoyl)-sn-glycero-3-phosphocholine + H2O = 1-hexadecanoyl-sn-glycero-3-phosphocholine + (9Z)-octadecenoate + H(+). It carries out the reaction 1-hexadecanoyl-2-(9Z,12Z-octadecadienoyl)-sn-glycero-3-phosphocholine + H2O = (9Z,12Z)-octadecadienoate + 1-hexadecanoyl-sn-glycero-3-phosphocholine + H(+). It catalyses the reaction 1-hexadecanoyl-2-(4Z,7Z,10Z,13Z,16Z,19Z-docosahexaenoyl)-sn-glycero-3-phosphocholine + H2O = (4Z,7Z,10Z,13Z,16Z,19Z)-docosahexaenoate + 1-hexadecanoyl-sn-glycero-3-phosphocholine + H(+). Secretory calcium-dependent phospholipase A2 that primarily targets extracellular phospholipids. Hydrolyzes the ester bond of the fatty acyl group attached at sn-2 position of phospholipids (phospholipase A2 activity), releasing various unsaturated fatty acids including oleoate, linoleoate, arachidonate, docosahexaenoate and lysophosphatidylethanolamines in preference to lysophosphatidylcholines. In response to high-fat diet, hydrolyzes minor lipoprotein phospholipids including phosphatidylserines, phosphatidylinositols and phosphatidylglycerols, altering lipoprotein composition and fat storage in adipose tissue and liver. May act in an autocrine and paracrine manner. Contributes to lipid remodeling of cellular membranes and generation of lipid mediators involved in pathogen clearance. Cleaves sn-2 fatty acyl chains of phosphatidylglycerols and phosphatidylethanolamines, which are major components of membrane phospholipids in bacteria. Acts as a hair follicle phospholipase A2. Selectively releases lysophosphatidylethanolamines (LPE) and various unsaturated fatty acids in skin to regulate hair follicle homeostasis. May regulate the inflammatory response by releasing arachidonate, a precursor of prostaglandins and leukotrienes. Upon allergen exposure, may participate in allergic inflammatory response by enhancing leukotriene C4 synthesis and degranulation in mast cells. The chain is Group IIE secretory phospholipase A2 (Pla2g2e) from Mus musculus (Mouse).